Reading from the N-terminus, the 268-residue chain is DNA repair protein RecO (268 aa).

Belongs to the RecO family.

In terms of biological role, involved in DNA repair and RecF pathway recombination. This chain is DNA repair protein RecO, found in Mycobacterium leprae (strain Br4923).